We begin with the raw amino-acid sequence, 211 residues long: Protein-L-isoaspartate O-methyltransferase 2 (211 aa).

Residue S60 is part of the active site.

The protein belongs to the methyltransferase superfamily. L-isoaspartyl/D-aspartyl protein methyltransferase family.

Its subcellular location is the cytoplasm. It catalyses the reaction [protein]-L-isoaspartate + S-adenosyl-L-methionine = [protein]-L-isoaspartate alpha-methyl ester + S-adenosyl-L-homocysteine. Functionally, catalyzes the methyl esterification of L-isoaspartyl residues in peptides and proteins that result from spontaneous decomposition of normal L-aspartyl and L-asparaginyl residues. It plays a role in the repair and/or degradation of damaged proteins. The polypeptide is Protein-L-isoaspartate O-methyltransferase 2 (Nitrosospira multiformis (strain ATCC 25196 / NCIMB 11849 / C 71)).